The sequence spans 312 residues: Ribosomal protein L11 methyltransferase (312 aa).

S-adenosyl-L-methionine contacts are provided by Thr-162, Gly-183, Asp-205, and Asn-248.

The protein belongs to the methyltransferase superfamily. PrmA family.

The protein resides in the cytoplasm. It catalyses the reaction L-lysyl-[protein] + 3 S-adenosyl-L-methionine = N(6),N(6),N(6)-trimethyl-L-lysyl-[protein] + 3 S-adenosyl-L-homocysteine + 3 H(+). Methylates ribosomal protein L11. This chain is Ribosomal protein L11 methyltransferase, found in Bacillus cereus (strain Q1).